A 433-amino-acid chain; its full sequence is Pyrimidine-nucleoside phosphorylase (433 aa).

Residue 81 to 83 (KHS) coordinates phosphate. K(+) contacts are provided by G88 and T90. Phosphate is bound by residues T92, 108 to 110 (KMS), and T120. 2 residues coordinate substrate: R168 and K187. K(+) is bound by residues L243, A246, and E255.

It belongs to the thymidine/pyrimidine-nucleoside phosphorylase family. Homodimer. K(+) serves as cofactor.

The enzyme catalyses uridine + phosphate = alpha-D-ribose 1-phosphate + uracil. It carries out the reaction thymidine + phosphate = 2-deoxy-alpha-D-ribose 1-phosphate + thymine. The catalysed reaction is 2'-deoxyuridine + phosphate = 2-deoxy-alpha-D-ribose 1-phosphate + uracil. In terms of biological role, catalyzes phosphorolysis of the pyrimidine nucleosides uridine, thymidine and 2'-deoxyuridine with the formation of the corresponding pyrimidine base and ribose-1-phosphate. This Staphylococcus epidermidis (strain ATCC 12228 / FDA PCI 1200) protein is Pyrimidine-nucleoside phosphorylase (pdp).